Reading from the N-terminus, the 238-residue chain is 15,16-dihydrobiliverdin:ferredoxin oxidoreductase (238 aa).

This sequence belongs to the HY2 family.

The enzyme catalyses 15,16-dihydrobiliverdin + oxidized 2[4Fe-4S]-[ferredoxin] = biliverdin IXalpha + reduced 2[4Fe-4S]-[ferredoxin] + 2 H(+). Its function is as follows. Catalyzes the two-electron reduction of biliverdin IX-alpha at the C15 methine bridge. This Prochlorococcus marinus (strain NATL1A) protein is 15,16-dihydrobiliverdin:ferredoxin oxidoreductase.